Consider the following 41-residue polypeptide: AVVFDPPPALWAEADXQQEPLRNLTQTVGQYLPTLSGXLAE.

The N-linked (GlcNAc...) asparagine glycan is linked to N23.

In terms of assembly, interacts with CRISP3. Post-translationally, glycosylated. Plasma.

Its subcellular location is the secreted. This Equus caballus (Horse) protein is Alpha-1B-glycoprotein (A1BG).